The following is a 353-amino-acid chain: Phospho-N-acetylmuramoyl-pentapeptide-transferase (353 aa).

10 helical membrane passes run 24–44 (LGFF…ILWA), 66–86 (TPTM…VLCA), 88–108 (LSNL…FVGF), 129–149 (FGML…KGLD), 160–180 (PLFE…FLST), 192–212 (GLAS…VYVA), 229–249 (VGEL…FLWY), 256–276 (VFMG…NAIV), 281–301 (ILLV…ILQV), and 330–350 (KVIV…LLSL).

The protein belongs to the glycosyltransferase 4 family. MraY subfamily. The cofactor is Mg(2+).

The protein localises to the cell inner membrane. It catalyses the reaction UDP-N-acetyl-alpha-D-muramoyl-L-alanyl-gamma-D-glutamyl-meso-2,6-diaminopimeloyl-D-alanyl-D-alanine + di-trans,octa-cis-undecaprenyl phosphate = di-trans,octa-cis-undecaprenyl diphospho-N-acetyl-alpha-D-muramoyl-L-alanyl-D-glutamyl-meso-2,6-diaminopimeloyl-D-alanyl-D-alanine + UMP. It functions in the pathway cell wall biogenesis; peptidoglycan biosynthesis. Functionally, catalyzes the initial step of the lipid cycle reactions in the biosynthesis of the cell wall peptidoglycan: transfers peptidoglycan precursor phospho-MurNAc-pentapeptide from UDP-MurNAc-pentapeptide onto the lipid carrier undecaprenyl phosphate, yielding undecaprenyl-pyrophosphoryl-MurNAc-pentapeptide, known as lipid I. This is Phospho-N-acetylmuramoyl-pentapeptide-transferase from Helicobacter pylori (strain J99 / ATCC 700824) (Campylobacter pylori J99).